The chain runs to 615 residues: Ankyrin repeat and LEM domain-containing protein 1 (615 aa).

3 ANK repeats span residues 39–71, 75–104, and 108–137; these read DGAAAVHLAAGARHPRGLRCLGALLRQGGDPNA, EALTPLHVAAAWGCRRGLELLLSQGADPAL, and DGLRPLDLALQQGHLECARVLQDLDTRTRT. A disordered region spans residues 138-210; it reads RTRIGAETQE…DKHGSSASPP (73 aa). Residues 271-280 carry the Nuclear export signal motif; sequence LNARLQALTL. Residues 283–294 are compositionally biased toward polar residues; that stretch reads PNAAGFQSSPSS. Positions 283–315 are disordered; the sequence is PNAAGFQSSPSSMPLLDRSPAHSPPRTPTPGAS. Residues 355 to 399 enclose the LEM domain; it reads HLPVSTVSDLELLKGLRALGENPHPITPFTRQLYHQQLEEAQIAP. Residues 448–566 enclose the GIY-YIG domain; the sequence is KSSFTYLLLD…ALGIQTLTNQ (119 aa). The Nuclear localization signal signature appears at 579-586; it reads PPARRRRL.

In terms of assembly, interacts (via LEM domain) with BANF1; the interaction may favor BANF1 dimerization. In terms of tissue distribution, expression is predominant in adult bone marrow.

Its subcellular location is the cytoplasm. It is found in the nucleus. Endonuclease that probably plays a role in the DNA damage response and DNA repair. The sequence is that of Ankyrin repeat and LEM domain-containing protein 1 (ANKLE1) from Homo sapiens (Human).